The following is a 25-amino-acid chain: Acyl carrier protein (25 aa).

The Carrier domain maps to 2-25 (ESIEQRVKKIVAEQLGVAEAEIKA).

Belongs to the acyl carrier protein (ACP) family. 4'-phosphopantetheine is transferred from CoA to a specific serine of apo-ACP by AcpS. This modification is essential for activity because fatty acids are bound in thioester linkage to the sulfhydryl of the prosthetic group.

It is found in the cytoplasm. The protein operates within lipid metabolism; fatty acid biosynthesis. Its function is as follows. Carrier of the growing fatty acid chain in fatty acid biosynthesis. The chain is Acyl carrier protein (acpP) from Alcaligenes faecalis.